A 436-amino-acid chain; its full sequence is Tol-Pal system protein TolB (436 aa).

An N-terminal signal peptide occupies residues 1-28 (MMKCSFFRAILVAVGLMAAAVVATPANA).

It belongs to the TolB family. In terms of assembly, the Tol-Pal system is composed of five core proteins: the inner membrane proteins TolA, TolQ and TolR, the periplasmic protein TolB and the outer membrane protein Pal. They form a network linking the inner and outer membranes and the peptidoglycan layer.

The protein resides in the periplasm. Its function is as follows. Part of the Tol-Pal system, which plays a role in outer membrane invagination during cell division and is important for maintaining outer membrane integrity. This Rhizobium etli (strain CIAT 652) protein is Tol-Pal system protein TolB.